Reading from the N-terminus, the 362-residue chain is Atypical chemokine receptor 3 (362 aa).

At 1 to 47 (MDVHLFDYVEPGNYSDINWPCNSSDCIVVDTVQCPAMPNKNVLLYTL) the chain is on the extracellular side. 2 N-linked (GlcNAc...) asparagine glycosylation sites follow: asparagine 13 and asparagine 22. Residues 48 to 68 (SFIYIFIFVIGMIANSVVVWV) form a helical membrane-spanning segment. Residues 69–81 (NIQAKTTGYDTHC) are Cytoplasmic-facing. Residues 82-102 (YILNLAIADLWVVITIPVWVV) traverse the membrane as a helical segment. Residues 103–118 (SLVQHNQWPMGELTCK) lie on the Extracellular side of the membrane. The cysteines at positions 117 and 196 are disulfide-linked. Residues 119–139 (ITHLIFSINLFGSIFFLACMS) traverse the membrane as a helical segment. The Cytoplasmic portion of the chain corresponds to 140-162 (VDRYLSITYFTSTSSYKKKMVRR). The helical transmembrane segment at 163-183 (VVCVLVWLLAFFVSLPDTYYL) threads the bilayer. Over 184 to 213 (KTVTSASNNETYCRSFYPEHSIKEWLIGME) the chain is Extracellular. The chain crosses the membrane as a helical span at residues 214 to 234 (LVSVILGFAVPFTIIAIFYFL). Residues 235 to 252 (LARAMSASGDQEKHSSRK) lie on the Cytoplasmic side of the membrane. Residues 253-273 (IIFSYVVVFLVCWLPYHFVVL) traverse the membrane as a helical segment. The Extracellular segment spans residues 274-296 (LDIFSILHYIPFTCQLENVLFTA). A helical transmembrane segment spans residues 297-319 (LHVTQCLSLVHCCVNPVLYSFIN). Residues 320 to 362 (RNYRYELMKAFIFKYSAKTGLTKLIDASRVSETEYSALEQNTK) are Cytoplasmic-facing. Residues 324–362 (YELMKAFIFKYSAKTGLTKLIDASRVSETEYSALEQNTK) are C-terminal cytoplasmic tail. Phosphoserine occurs at positions 347, 350, and 355.

It belongs to the G-protein coupled receptor 1 family. Atypical chemokine receptor subfamily. As to quaternary structure, homodimer. Can form heterodimers with CXCR4; heterodimerization may regulate CXCR4 signaling activity. Interacts with ARRB1 and ARRB2. In terms of processing, the Ser/Thr residues in the C-terminal cytoplasmic tail may be phosphorylated. Ubiquitinated at the Lys residues in its C-terminal cytoplasmic tail and is essential for correct trafficking from and to the cell membrane. Deubiquitinated by CXCL12-stimulation in a reversible manner. As to expression, expressed in vascular smooth muscle cells (at protein level). In brain, expressed in blood vessels, pyramidal cells in hippocampal subfield CA3, mature dentate gyrus granule cells, ventricle walls, olfactory bulb, accumbens shell, supraoptic, lateroanterior and ventromedial hypothalamic nuclei, medial region of thalamus, and motor nuclei, central gray and raphe magnus nucleus of brain stem. Detected in primary neurons, GABAergic neurons, astrocytes, cerebral cortex, ventral striatum and choroid plexus. Not detected in mesencephalon.

The protein localises to the cell membrane. It localises to the early endosome. The protein resides in the recycling endosome. Its function is as follows. Atypical chemokine receptor that controls chemokine levels and localization via high-affinity chemokine binding that is uncoupled from classic ligand-driven signal transduction cascades, resulting instead in chemokine sequestration, degradation, or transcytosis. Also known as interceptor (internalizing receptor) or chemokine-scavenging receptor or chemokine decoy receptor. Acts as a receptor for chemokines CXCL11 and CXCL12/SDF1. Chemokine binding does not activate G-protein-mediated signal transduction but instead induces beta-arrestin recruitment, leading to ligand internalization and activation of MAPK signaling pathway. Required for regulation of CXCR4 protein levels in migrating interneurons, thereby adapting their chemokine responsiveness. In glioma cells, transduces signals via MEK/ERK pathway, mediating resistance to apoptosis. Promotes cell growth and survival. Not involved in cell migration, adhesion or proliferation of normal hematopoietic progenitors but activated by CXCL11 in malignant hemapoietic cells, leading to phosphorylation of ERK1/2 (MAPK3/MAPK1) and enhanced cell adhesion and migration. Plays a regulatory role in CXCR4-mediated activation of cell surface integrins by CXCL12. Required for heart valve development. Atypical chemokine receptor that controls chemokine levels and localization via high-affinity chemokine binding that is uncoupled from classic ligand-driven signal transduction cascades, resulting instead in chemokine sequestration, degradation, or transcytosis. Also known as interceptor (internalizing receptor) or chemokine-scavenging receptor or chemokine decoy receptor. Acts as a receptor for chemokines CXCL11 and CXCL12/SDF1. Chemokine binding does not activate G-protein-mediated signal transduction but instead induces beta-arrestin recruitment, leading to ligand internalization and activation of MAPK signaling pathway. Required for regulation of CXCR4 protein levels in migrating interneurons, thereby adapting their chemokine responsiveness. In glioma cells, transduces signals via MEK/ERK pathway, mediating resistance to apoptosis. Promotes cell growth and survival. Not involved in cell migration, adhesion or proliferation of normal hematopoietic progenitors but activated by CXCL11 in malignant hemapoietic cells, leading to phosphorylation of ERK1/2 (MAPK3/MAPK1) and enhanced cell adhesion and migration. Plays a regulatory role in CXCR4-mediated activation of cell surface integrins by CXCL12. Required for heart valve development. Regulates axon guidance in the oculomotor system through the regulation of CXCL12 levels. The chain is Atypical chemokine receptor 3 from Rattus norvegicus (Rat).